A 314-amino-acid chain; its full sequence is MATELDKIFLILEIAEFIIGMLGNVFIGLVNCSEGIKNQKVFSADFILTCLAISTIGQLFVILFDSFLVGLASHLYTTYRLGKPVIMLWHMTNHLTTWLATCLSIFYFFKIAHFPHSLFLWLRWRMNGMIVMLLILSLFLLIFNSLVLEIFIDISLNIIDKSNLTLYLDESKTVYDKLSILKTLLSLTSFIPFSLSLTSLLFLFLSLVRHTRNLKLSSLGSRDSSTEAHRRAMKMVMSFLFLFIVHFFSLQVANWIFFMLWNNKYIKFAMLALNAFPSCHSFILILGNSKLRQTAVRLLWHLRNYTKTPNPLPL.

At 1 to 7 the chain is on the extracellular side; sequence MATELDK. A helical transmembrane segment spans residues 8 to 28; it reads IFLILEIAEFIIGMLGNVFIG. Topologically, residues 29–50 are cytoplasmic; that stretch reads LVNCSEGIKNQKVFSADFILTC. Residues 51-71 form a helical membrane-spanning segment; the sequence is LAISTIGQLFVILFDSFLVGL. The Extracellular segment spans residues 72-101; the sequence is ASHLYTTYRLGKPVIMLWHMTNHLTTWLAT. A helical transmembrane segment spans residues 102 to 122; that stretch reads CLSIFYFFKIAHFPHSLFLWL. Topologically, residues 123–127 are cytoplasmic; that stretch reads RWRMN. The chain crosses the membrane as a helical span at residues 128–148; it reads GMIVMLLILSLFLLIFNSLVL. The Extracellular segment spans residues 149–187; sequence EIFIDISLNIIDKSNLTLYLDESKTVYDKLSILKTLLSL. The N-linked (GlcNAc...) asparagine glycan is linked to N163. Residues 188 to 208 traverse the membrane as a helical segment; the sequence is TSFIPFSLSLTSLLFLFLSLV. The Cytoplasmic segment spans residues 209–238; sequence RHTRNLKLSSLGSRDSSTEAHRRAMKMVMS. The helical transmembrane segment at 239–259 threads the bilayer; that stretch reads FLFLFIVHFFSLQVANWIFFM. Topologically, residues 260–265 are extracellular; the sequence is LWNNKY. The helical transmembrane segment at 266-286 threads the bilayer; sequence IKFAMLALNAFPSCHSFILIL. Residues 287 to 314 are Cytoplasmic-facing; sequence GNSKLRQTAVRLLWHLRNYTKTPNPLPL.

This sequence belongs to the G-protein coupled receptor T2R family.

The protein resides in the membrane. Its function is as follows. Receptor that may play a role in the perception of bitterness and is gustducin-linked. May play a role in sensing the chemical composition of the gastrointestinal content. The activity of this receptor may stimulate alpha gustducin, mediate PLC-beta-2 activation and lead to the gating of TRPM5. The sequence is that of Taste receptor type 2 member 42 (TAS2R42) from Pan troglodytes (Chimpanzee).